The following is a 562-amino-acid chain: Potassium-transporting ATPase potassium-binding subunit (562 aa).

A run of 12 helical transmembrane segments spans residues 6-26 (FLLI…LGGF), 62-82 (YALA…VLLM), 132-152 (GLTV…FALI), 175-195 (LYVL…QGVL), 253-273 (FVQM…FGQV), 283-303 (LIWA…YAEL), 327-347 (FGIL…CGAV), 356-376 (ALGG…FGGV), 379-399 (GLYG…LMIG), 416-436 (MTAL…ALAL), 483-503 (LLLA…VLAI), and 526-546 (LFIG…FIPA).

This sequence belongs to the KdpA family. As to quaternary structure, the system is composed of three essential subunits: KdpA, KdpB and KdpC.

Its subcellular location is the cell inner membrane. In terms of biological role, part of the high-affinity ATP-driven potassium transport (or Kdp) system, which catalyzes the hydrolysis of ATP coupled with the electrogenic transport of potassium into the cytoplasm. This subunit binds the periplasmic potassium ions and delivers the ions to the membrane domain of KdpB through an intramembrane tunnel. The polypeptide is Potassium-transporting ATPase potassium-binding subunit (Yersinia pseudotuberculosis serotype IB (strain PB1/+)).